The primary structure comprises 323 residues: L-lactate dehydrogenase (323 aa).

NAD(+) contacts are provided by residues V18, D39, R44, Y69, and 83–84 (GA). Positions 86 and 92 each coordinate substrate. NAD(+) contacts are provided by residues T105, 122-124 (AAN), and S147. 124–127 (NPVD) contributes to the substrate binding site. 152 to 155 (DTAR) contributes to the substrate binding site. H179 functions as the Proton acceptor in the catalytic mechanism. Y223 is subject to Phosphotyrosine. T232 contributes to the substrate binding site.

This sequence belongs to the LDH/MDH superfamily. LDH family. Homotetramer.

The protein localises to the cytoplasm. The catalysed reaction is (S)-lactate + NAD(+) = pyruvate + NADH + H(+). Its pathway is fermentation; pyruvate fermentation to lactate; (S)-lactate from pyruvate: step 1/1. In terms of biological role, catalyzes the conversion of lactate to pyruvate. This chain is L-lactate dehydrogenase, found in Pediococcus acidilactici.